A 457-amino-acid chain; its full sequence is Glutamate--tRNA ligase 1 (457 aa).

The 'HIGH' region motif lies at 9–19 (PSPTGYIHIGN). The 'KMSKS' region motif lies at 250–254 (GLSKR). K253 is an ATP binding site.

Belongs to the class-I aminoacyl-tRNA synthetase family. Glutamate--tRNA ligase type 1 subfamily. Monomer.

The protein resides in the cytoplasm. It catalyses the reaction tRNA(Glu) + L-glutamate + ATP = L-glutamyl-tRNA(Glu) + AMP + diphosphate. Catalyzes the attachment of glutamate to tRNA(Glu) in a two-step reaction: glutamate is first activated by ATP to form Glu-AMP and then transferred to the acceptor end of tRNA(Glu). The chain is Glutamate--tRNA ligase 1 from Brucella canis (strain ATCC 23365 / NCTC 10854 / RM-666).